Reading from the N-terminus, the 296-residue chain is MSQKELWYETLHANFGQYFSVENVLYREKTEHQDLVIFENPELGRVMALDGVVQTTERDEFIYHEMMTHVPLLAHGQAKKVLIIGGGDGAMLREVSRHKNIEQITMVEIDAGVVEFCRQYLPNHSAGAYDDPRFKLVIDDGVNFVNQTTEKFDVIISDCTDPIGPGESLFTSVFYEGCARSLNEGGIFVAQNGVCFLQQDEAVNSHNKLSHYFSDVSFYQAAIPTYYGGIMTFAWATQNPALRQLDLATLQNRFAQAGLACRYYNPAIHVGSFALPQYLLDALTTIPKVIGLDSSE.

Residues 5 to 238 (ELWYETLHAN…GIMTFAWATQ (234 aa)) enclose the PABS domain. Gln33 is an S-methyl-5'-thioadenosine binding site. The spermidine site is built by His64 and Asp88. S-methyl-5'-thioadenosine contacts are provided by residues Glu108 and 140-141 (DG). Catalysis depends on Asp158, which acts as the Proton acceptor. 158-161 (DCTD) serves as a coordination point for spermidine. Pro165 provides a ligand contact to S-methyl-5'-thioadenosine.

Belongs to the spermidine/spermine synthase family. In terms of assembly, homodimer or homotetramer.

Its subcellular location is the cytoplasm. The catalysed reaction is S-adenosyl 3-(methylsulfanyl)propylamine + putrescine = S-methyl-5'-thioadenosine + spermidine + H(+). The protein operates within amine and polyamine biosynthesis; spermidine biosynthesis; spermidine from putrescine: step 1/1. In terms of biological role, catalyzes the irreversible transfer of a propylamine group from the amino donor S-adenosylmethioninamine (decarboxy-AdoMet) to putrescine (1,4-diaminobutane) to yield spermidine. In Yersinia pseudotuberculosis serotype O:3 (strain YPIII), this protein is Polyamine aminopropyltransferase.